Reading from the N-terminus, the 162-residue chain is Protein-export protein SecB (162 aa).

The protein belongs to the SecB family. In terms of assembly, homotetramer, a dimer of dimers. One homotetramer interacts with 1 SecA dimer.

It localises to the cytoplasm. In terms of biological role, one of the proteins required for the normal export of preproteins out of the cell cytoplasm. It is a molecular chaperone that binds to a subset of precursor proteins, maintaining them in a translocation-competent state. It also specifically binds to its receptor SecA. The chain is Protein-export protein SecB from Pseudomonas syringae pv. syringae (strain B728a).